A 232-amino-acid chain; its full sequence is Large ribosomal subunit protein uL1 (232 aa).

It belongs to the universal ribosomal protein uL1 family. In terms of assembly, part of the 50S ribosomal subunit.

In terms of biological role, binds directly to 23S rRNA. The L1 stalk is quite mobile in the ribosome, and is involved in E site tRNA release. Functionally, protein L1 is also a translational repressor protein, it controls the translation of the L11 operon by binding to its mRNA. This chain is Large ribosomal subunit protein uL1, found in Bartonella quintana (strain Toulouse) (Rochalimaea quintana).